The primary structure comprises 192 residues: Signal peptidase complex catalytic subunit SEC11C (192 aa).

At M1–R28 the chain is on the cytoplasmic side. A helical; Signal-anchor for type II membrane protein membrane pass occupies residues Q29 to W48. At K49 to S192 the chain is on the lumenal side. Residues S68, H108, and D134 each act as charge relay system in the active site. The C-terminal short (CTS) helix stretch occupies residues A177–L188.

It belongs to the peptidase S26B family. Component of the signal peptidase complex paralog C (SPC-C) composed of a catalytic subunit SEC11C and three accessory subunits SPCS1, SPCS2 and SPCS3. Within the complex, interacts with SPCS2 and SPCS3. The complex induces a local thinning of the ER membrane which is used to measure the length of the signal peptide (SP) h-region of protein substrates. This ensures the selectivity of the complex towards h-regions shorter than 18-20 amino acids. May undergo processing at the N-terminus.

The protein localises to the endoplasmic reticulum membrane. It catalyses the reaction Cleavage of hydrophobic, N-terminal signal or leader sequences from secreted and periplasmic proteins.. Functionally, catalytic component of the signal peptidase complex (SPC) which catalyzes the cleavage of N-terminal signal sequences from nascent proteins as they are translocated into the lumen of the endoplasmic reticulum. Specifically cleaves N-terminal signal peptides that contain a hydrophobic alpha-helix (h-region) shorter than 18-20 amino acids. The polypeptide is Signal peptidase complex catalytic subunit SEC11C (SEC11C) (Homo sapiens (Human)).